The primary structure comprises 258 residues: Meiotic drive suppressor wtf20 (258 aa).

Residues 1–71 (MKNNYTSLKS…GPTEIANPNV (71 aa)) form a disordered region. Residues 19-30 (KTDHEIDLEKGL) show a composition bias toward basic and acidic residues. The next 3 helical transmembrane spans lie at 84–106 (IYFL…TAWV), 121–140 (FSVT…FYFY), and 196–216 (SASA…AETV).

It belongs to the WTF family. In terms of assembly, homomer. Interacts with other proteins that exhibit high sequence similarity.

It is found in the spore membrane. The protein resides in the vacuole membrane. Acts as a suppressor component of the dual wtf meiotic drive system, and can suppress but not confer meiotic drive by compatible poisons. Wtf meiotic drive systems promote unequal transmission of alleles from the parental zygote to progeny spores by encoding a poison and an antidote from the same locus; the poison is trans-acting and forms toxic aggregates in all spores within an ascus, wherease the antidote is spore-specific and targets aggregates for degradation by the vacuole. Meiotic drive by wtf systems therefore lead to poisoning of all progeny that do not inherit the dual poison/antidote allele, or express a compatible antidote. In Schizosaccharomyces pombe (strain 972 / ATCC 24843) (Fission yeast), this protein is Meiotic drive suppressor wtf20.